We begin with the raw amino-acid sequence, 332 residues long: MMKKPVVIGLAVVVLAAVVAGGYWWYQSRQDNGLKLYGNVDIRTVNLSFRVGGRVESLAVDEGDAIKAGQVLGELDHKPYEIALMQVKAGVSVAQAQYDLMLAGYRDEEIAQAAAAVKQAQAAYDYAQNFYNRQQGLWKSRTISANDLENARSSRNQAQATLKSAQDKLRQYRSGNREQDIAQAKASLEQAQAQLAQAELNLQDSTLIAPSDGTLLTRAVEPGTVLNEGGTVFTVSLTRPVWVRAYVDERNLDQAQPGRKVLLYTDGRPDKPYHGQIGFVSPTAEFTPKTVETPDLRTDLVYRLRIVVTDADDALRQGMPVTVQFGNEAGHE.

Positions 1–16 (MMKKPVVIGLAVVVLA) are cleaved as a signal peptide. A coiled-coil region spans residues 108-209 (EEIAQAAAAV…LNLQDSTLIA (102 aa)).

It belongs to the UPF0194 family.

It localises to the periplasm. This is UPF0194 membrane protein YbhG from Shigella boydii serotype 4 (strain Sb227).